Consider the following 1049-residue polypeptide: ABC transporter ATM1 (1049 aa).

A mitochondrion-targeting transit peptide spans 1–90; it reads MRSFYNKCFT…NIFKNKGRLY (90 aa). 6 helical membrane passes run 357–377, 397–419, 481–501, 506–526, 591–611, and 619–639; these read IFCS…TPIL, IYST…VLSS, VMVF…YILT, YTVS…TTLI, FLNF…MYLT, and IFPF…AMPL. The region spanning 360-651 is the ABC transmembrane type-1 domain; that stretch reads SLFFLLCSKM…FGTIYRETKL (292 aa). Residues 807-1043 form the ABC transporter domain; it reads LKNHKIINNS…NHFYREYYDS (237 aa). 843-850 provides a ligand contact to ATP; the sequence is GKSGSGKS.

Belongs to the ABC transporter superfamily. ABCB family. Heavy Metal importer (TC 3.A.1.210) subfamily. Homodimer. Interacts with ISCU. Interacts with IscA2. Interacts with NBP35. Interacts with mHCF101.

Its subcellular location is the mitochondrion membrane. Its activity is regulated as follows. ATPase activity is stimulated by reduced glutathione. Its function is as follows. Transports glutathione-coordinated [4Fe-4S] iron-sulfur clusters in an ATP-dependent manner. Required for optimal parasite growth during erythrocytic stages. The sequence is that of ABC transporter ATM1 from Plasmodium falciparum (isolate 3D7).